Here is a 715-residue protein sequence, read N- to C-terminus: Forkhead box protein P2 (715 aa).

The span at Met-1–Asp-28 shows a compositional bias: polar residues. Disordered stretches follow at residues Met-1–Thr-46 and Asp-281–Ser-339. The segment covering Thr-292–Ser-305 has biased composition (low complexity). The span at Ala-326–Gly-337 shows a compositional bias: basic and acidic residues. The C2H2-type zinc finger occupies Gly-346 to His-371. Residues Val-388–Leu-409 are leucine-zipper. The CTBP1-binding stretch occupies residues Pro-422 to Val-426. Residues Thr-438–Gln-459 show a composition bias toward low complexity. A disordered region spans residues Thr-438–Thr-465. The fork-head DNA-binding region spans Arg-504–Leu-594. Disordered stretches follow at residues Leu-649–Ile-668 and Val-678–Glu-715. The segment covering Leu-699–Glu-715 has biased composition (acidic residues).

As to quaternary structure, forms homodimers and heterodimers with FOXP1 and FOXP4. Dimerization is required for DNA-binding. Interacts with CTBP1. Interacts with FOXP1. Isoform 1 and isoform 3 interact with TBR1. Interacts with ZMYM2. In terms of tissue distribution, isoform 1 and isoform 6 are expressed in adult and fetal brain, caudate nucleus and lung.

The protein localises to the nucleus. In terms of biological role, transcriptional repressor that may play a role in the specification and differentiation of lung epithelium. May also play a role in developing neural, gastrointestinal and cardiovascular tissues. Can act with CTBP1 to synergistically repress transcription but CTPBP1 is not essential. Plays a role in synapse formation by regulating SRPX2 levels. Involved in neural mechanisms mediating the development of speech and language. The polypeptide is Forkhead box protein P2 (FOXP2) (Homo sapiens (Human)).